The chain runs to 367 residues: Biotin synthase (367 aa).

The Radical SAM core domain maps to 67 to 291 (NAVQISTLLS…IAVTRICCPS (225 aa)). Positions 82, 86, and 89 each coordinate [4Fe-4S] cluster. The [2Fe-2S] cluster site is built by Cys128, Cys159, Cys219, and Arg295.

It belongs to the radical SAM superfamily. Biotin synthase family. As to quaternary structure, homodimer. [4Fe-4S] cluster is required as a cofactor. The cofactor is [2Fe-2S] cluster.

It carries out the reaction (4R,5S)-dethiobiotin + (sulfur carrier)-SH + 2 reduced [2Fe-2S]-[ferredoxin] + 2 S-adenosyl-L-methionine = (sulfur carrier)-H + biotin + 2 5'-deoxyadenosine + 2 L-methionine + 2 oxidized [2Fe-2S]-[ferredoxin]. Its pathway is cofactor biosynthesis; biotin biosynthesis; biotin from 7,8-diaminononanoate: step 2/2. Its function is as follows. Catalyzes the conversion of dethiobiotin (DTB) to biotin by the insertion of a sulfur atom into dethiobiotin via a radical-based mechanism. The polypeptide is Biotin synthase (Psychrobacter sp. (strain PRwf-1)).